The sequence spans 63 residues: Large ribosomal subunit protein bL28A (63 aa).

It belongs to the bacterial ribosomal protein bL28 family.

This Nocardia farcinica (strain IFM 10152) protein is Large ribosomal subunit protein bL28A.